The following is an 857-amino-acid chain: Zinc finger protein 574 (857 aa).

14 C2H2-type zinc fingers span residues 15 to 37 (YVCS…QQSH), 58 to 80 (YQCL…QELH), 99 to 121 (YECP…RYTH), 206 to 228 (YKCS…QGTH), 297 to 319 (FSCG…QISH), 324 to 346 (FSCP…LKSH), 352 to 374 (YLCV…RRSH), 380 to 401 (FTCE…RRVH), 428 to 451 (FHCD…RFVH), 457 to 479 (HKCP…MLTH), 485 to 507 (YSCT…RLTH), 513 to 535 (YKCQ…QYVH), 541 to 563 (YKCN…QYHH), and 569 to 591 (YKCQ…QLGH). The C2H2-type 15; degenerate zinc-finger motif lies at 597–619 (HRCRECGTNFPSVQRLQDHRCSK). C2H2-type zinc fingers lie at residues 628–651 (LECP…AAQH), 681–703 (LECS…RRIH), 709–731 (YPCP…RRLH), 737–759 (FKCD…KRIH), and 765–787 (HSCP…RKLH). The interval 648–678 (AAQHSGNKRSNVSSGKGTPVLPRNKLKGGGG) is disordered. A compositionally biased stretch (polar residues) spans 651-663 (HSGNKRSNVSSGK).

The protein belongs to the krueppel C2H2-type zinc-finger protein family.

It localises to the nucleus. May be involved in transcriptional regulation. The polypeptide is Zinc finger protein 574 (znf574) (Xenopus tropicalis (Western clawed frog)).